A 255-amino-acid chain; its full sequence is MPIEILTIPCLNDNYAFLVHDTATGQTALIDVPEAAPILKVLAERTWQLSEVWITHHHADHVQGLGDILSAHPAQVRGAARDAHRLPALDVELRDGESFDFAGHKVDVMDVSGHTVGHIAYYCADAKAVFTADSLMALGCGRLFEGTADQMWDSLSKLAALPSETQVYSGHEYTAANARFALTIDPHNPDLISRSEGITAARAAAKPTVPSTLATEAATNPFLRAADPAIRAHLNMQHASDSEVFAEIRARKDAF.

H56, H58, D60, H61, H114, D133, and H171 together coordinate Zn(2+).

It belongs to the metallo-beta-lactamase superfamily. Glyoxalase II family. In terms of assembly, monomer. Requires Zn(2+) as cofactor.

The enzyme catalyses an S-(2-hydroxyacyl)glutathione + H2O = a 2-hydroxy carboxylate + glutathione + H(+). Its pathway is secondary metabolite metabolism; methylglyoxal degradation; (R)-lactate from methylglyoxal: step 2/2. In terms of biological role, thiolesterase that catalyzes the hydrolysis of S-D-lactoyl-glutathione to form glutathione and D-lactic acid. This chain is Hydroxyacylglutathione hydrolase, found in Roseobacter denitrificans (strain ATCC 33942 / OCh 114) (Erythrobacter sp. (strain OCh 114)).